The chain runs to 622 residues: Kelch-like protein 14 (622 aa).

A BTB domain is found at 33–145 (CDVTLTAQGQ…LYTANVTLSL (113 aa)). The tract at residues 73-108 (ALGPGAQDGLGGAPPKEPPPPPQEEPGTPSSSPEDK) is disordered. Residues 87 to 96 (PKEPPPPPQE) show a composition bias toward pro residues. Kelch repeat units lie at residues 317–366 (MLLL…EVEN), 367–418 (FLFV…RLDK), 419–465 (NLYV…VHNG), 467–512 (IYIS…VMND), 514–564 (LYAI…VLDD), and 566–614 (IYLV…TVIL).

The protein localises to the cytoplasm. The protein resides in the cytosol. Its subcellular location is the endoplasmic reticulum membrane. This chain is Kelch-like protein 14 (KLHL14), found in Gallus gallus (Chicken).